The chain runs to 261 residues: Zinc finger protein 664 (261 aa).

9 C2H2-type zinc fingers span residues 3–25, 31–53, 59–81, 87–109, 115–137, 143–165, 171–193, 199–221, and 227–249; these read YKCP…QKIH, HKCD…WRDH, YKCD…KKIH, YKCY…MRVH, YVCS…QRVH, FKCE…QRVH, YKCY…QRVH, YRCC…QRVH, and FKCD…QRVH. Lysine 257 participates in a covalent cross-link: Glycyl lysine isopeptide (Lys-Gly) (interchain with G-Cter in SUMO2).

This sequence belongs to the krueppel C2H2-type zinc-finger protein family.

It is found in the nucleus. In terms of biological role, may be involved in transcriptional regulation. This Mus musculus (Mouse) protein is Zinc finger protein 664 (Znf664).